A 326-amino-acid polypeptide reads, in one-letter code: MVLEKKSALLEDLIKKCGGCAVVDGGFATQLEIHGAAINDPLWSAVSLIKNPELIKRVHMEYLEAGADIVVTSSYQATIPGFLSRGLSIEESESLLQKSVELAVEARDRFWEKVSKVSGHSYNRALVAASIGSYGAYLADGSEYSGHYGENVSLDKLKDFHRRRLQVLVEAGPDLLAFETIPNKLEAQACVELLEEEKVQIPAWICFTSVDGEKAPSGESFEECLEPLNKSNNIYAVGINCAPPQFIENLIRKFAKLTKKAIVVYPNSGEVWDGKAKQWLPSQCFGDDEFEMFATKWRDLGAKLIGGCCRTTPSTINAISRDLKRR.

The Hcy-binding domain occupies 9 to 323 (LLEDLIKKCG…STINAISRDL (315 aa)). Zn(2+) is bound by residues Cys241, Cys308, and Cys309.

Monomer. The cofactor is Zn(2+). As to expression, expressed predominantly in roots. Expressed in rosette leaves, cauline leaves and developing seeds.

It catalyses the reaction S-methyl-L-methionine + L-homocysteine = 2 L-methionine + H(+). Its activity is regulated as follows. Strongly inhibited by methionine. Its function is as follows. Catalyzes methyl transfer from S-methylmethionine (SMM) to adenosyl-L-homocysteine (AdoMet). SMM degradation (by HMT-1, HMT-2 and HMT-3) and biosynthesis (by MMT1) constitute the SMM cycle in plants, which is probably required to achieve short term control of AdoMet level. The sequence is that of Homocysteine S-methyltransferase 1 (HMT-1) from Arabidopsis thaliana (Mouse-ear cress).